Reading from the N-terminus, the 126-residue chain is UPF0344 protein ABC2900 (126 aa).

Transmembrane regions (helical) follow at residues A16–F36, A43–A63, L66–I86, and G104–I124.

Belongs to the UPF0344 family.

The protein localises to the cell membrane. The chain is UPF0344 protein ABC2900 from Shouchella clausii (strain KSM-K16) (Alkalihalobacillus clausii).